A 316-amino-acid chain; its full sequence is Exonuclease DPD1, chloroplastic/mitochondrial (316 aa).

A chloroplast and mitochondrion-targeting transit peptide spans 1–63 (MCISISQVSR…NVSTTTQGSR (63 aa)). The region spanning 112-282 (IVSDLETTGL…SDVLLLSKVF (171 aa)) is the Exonuclease domain. Mg(2+) is bound by residues Asp115 and Glu117. His269 (proton donor/acceptor) is an active-site residue. Position 274 (Asp274) interacts with Mg(2+).

Belongs to the exonuclease superfamily. TREX family. It depends on Mg(2+) as a cofactor. As to expression, highly expressed in mature pollen grains. Detected in flowers, senescing leaves and roots.

The protein resides in the plastid. It is found in the chloroplast. The protein localises to the mitochondrion. Inhibited by free nucleotide diphosphates (NDPs). In terms of biological role, exonuclease required for organelle DNA degradation during pollen development. Plays non-essential roles in maternal inheritance. May be part of the DNA salvage machinery. This chain is Exonuclease DPD1, chloroplastic/mitochondrial, found in Arabidopsis thaliana (Mouse-ear cress).